Reading from the N-terminus, the 846-residue chain is Integrin beta-PS (846 aa).

Residues 1 to 28 form the signal peptide; sequence MILERNRRCQLALLMIAILAAIAGQTDA. Residues 29 to 777 are Extracellular-facing; sequence QKAAKLTAVS…NKECPAKVFM (749 aa). A disulfide bond links C46 and C55. The N-linked (GlcNAc...) asparagine glycan is linked to N72. Positions 186-419 constitute a VWFA domain; sequence DLYYLMDLSK…ELVKEEYRKI (234 aa). The cysteines at positions 249 and 252 are disulfide-linked. N-linked (GlcNAc...) asparagine glycosylation is found at N266 and N277. C300 and C341 are joined by a disulfide. 2 N-linked (GlcNAc...) asparagine glycosylation sites follow: N403 and N428. Cystine bridges form between C441–C453, C473–C741, C507–C530, C522–C533, C535–C544, C546–C579, C561–C577, C571–C582, C584–C599, C601–C624, C606–C622, C614–C627, C629–C638, C640–C664, C647–C662, C656–C667, C669–C682, C685–C688, C692–C701, C698–C771, and C719–C749. I-EGF domains follow at residues 507 to 545, 546 to 600, 601 to 639, and 640 to 683; these read CENP…NKCE, CSAT…KHCE, CDNF…SNCG, and CQES…RHCE. A glycan (N-linked (GlcNAc...) asparagine) is linked at N557. N603 carries N-linked (GlcNAc...) asparagine glycosylation. Residue N644 is glycosylated (N-linked (GlcNAc...) asparagine). N-linked (GlcNAc...) asparagine glycosylation is present at N718. Residues 778-798 traverse the membrane as a helical segment; the sequence is LGIVMGVIAAIVLVGLAILLL. At 799–846 the chain is on the cytoplasmic side; that stretch reads WKLLTTIHDRREFARFEKERMNAKWDTGENPIYKQATSTFKNPMYAGK. Residues Y831 and Y843 each carry the phosphotyrosine modification.

The protein belongs to the integrin beta chain family. In terms of assembly, heterodimer of an alpha and a beta subunit. Beta-PS associates with either alpha-PS1, alpha-PS2, alpha-PS3, alpha-PS4 or alpha-PS5. As to expression, in ovaries, strongly expressed in follicle cells. In oocytes, expressed in the forming dorsal appendages (at protein level). Expressed in the embryonic dorsal cuticle, the larval eye and the wing imaginal disk. In testes, detected at the interface between somatic hub cells and cyst stem cells.

It localises to the cell membrane. It is found in the apical cell membrane. The protein localises to the lateral cell membrane. The protein resides in the basal cell membrane. Its function is as follows. Integrin alpha-PS1/beta-PS is a receptor for laminin. Integrin alpha-PS2/beta-PS is a receptor for Tig, wb and Ten-m. Contributes to endodermal integrity and adhesion between the midgut epithelium and the surrounding visceral muscle. Essential for migration of the primordial midgut cells and for maintaining, but not establishing, cell polarity in the midgut epithelium. The two beta subunits mediate midgut migration by distinct mechanisms: beta-PS requires rhea/talin and Itgbn does not. Required for rhea/talin correct cellular localization in the midgut. Required for many embryonic (dorsal closure and somatic muscle attachments) and postembryonic developmental processes (attachment between cell layers of imaginal disks, organization of ommatidial arrays and flight muscle development). Involved in the function and/or development of the olfactory system. In the testes, essential for shv-dependent maintenance of somatic hub cells and their localization to the apical tip. Plays a role in timely border cell migration during oogenesis. The sequence is that of Integrin beta-PS (mys) from Drosophila melanogaster (Fruit fly).